The following is a 170-amino-acid chain: Ubiquitin-conjugating enzyme E2 2 (170 aa).

The UBC core domain occupies 4–150; it reads PARRRLMRDF…VKETVEKSWE (147 aa). C88 acts as the Glycyl thioester intermediate in catalysis. A disordered region spans residues 148–170; sequence SWEDDLKDMDDGDDDDDDDDDDD. Residues 152–170 are compositionally biased toward acidic residues; it reads DLKDMDDGDDDDDDDDDDD.

The protein belongs to the ubiquitin-conjugating enzyme family.

It localises to the cytoplasm. It is found in the nucleus. It catalyses the reaction S-ubiquitinyl-[E1 ubiquitin-activating enzyme]-L-cysteine + [E2 ubiquitin-conjugating enzyme]-L-cysteine = [E1 ubiquitin-activating enzyme]-L-cysteine + S-ubiquitinyl-[E2 ubiquitin-conjugating enzyme]-L-cysteine.. It functions in the pathway protein modification; protein ubiquitination. Catalyzes the covalent attachment of ubiquitin to other proteins. Plays a role in transcription regulation by catalyzing the monoubiquitination of histone H2B to form H2BK123ub1. H2BK123ub1 gives a specific tag for epigenetic transcriptional activation and is also a prerequisite for H3K4me and H3K79me formation. Also involved in postreplication repair of UV-damaged DNA, in N-end rule-dependent protein degradation and in sporulation. In Eremothecium gossypii (strain ATCC 10895 / CBS 109.51 / FGSC 9923 / NRRL Y-1056) (Yeast), this protein is Ubiquitin-conjugating enzyme E2 2 (UBC2).